An 833-amino-acid chain; its full sequence is DNA ligase (833 aa).

Residues Asp-35–Asp-39, Ser-84–Leu-85, and Glu-115 contribute to the NAD(+) site. Lys-117 (N6-AMP-lysine intermediate) is an active-site residue. Residues Arg-138, Glu-175, Lys-292, and Lys-316 each coordinate NAD(+). Zn(2+)-binding residues include Cys-410, Cys-413, Cys-428, and Cys-434. Residues Leu-750–Pro-833 enclose the BRCT domain.

The protein belongs to the NAD-dependent DNA ligase family. LigA subfamily. The cofactor is Mg(2+). It depends on Mn(2+) as a cofactor.

It carries out the reaction NAD(+) + (deoxyribonucleotide)n-3'-hydroxyl + 5'-phospho-(deoxyribonucleotide)m = (deoxyribonucleotide)n+m + AMP + beta-nicotinamide D-nucleotide.. Its function is as follows. DNA ligase that catalyzes the formation of phosphodiester linkages between 5'-phosphoryl and 3'-hydroxyl groups in double-stranded DNA using NAD as a coenzyme and as the energy source for the reaction. It is essential for DNA replication and repair of damaged DNA. This is DNA ligase from Xanthomonas euvesicatoria pv. vesicatoria (strain 85-10) (Xanthomonas campestris pv. vesicatoria).